Here is a 443-residue protein sequence, read N- to C-terminus: Chromosomal replication initiator protein DnaA (443 aa).

A domain I, interacts with DnaA modulators region spans residues 1 to 75 (MNTQLNEIWQ…AIKQVTFKEY (75 aa)). The segment at 75-105 (YEIAFIVPSQENLNKLTKQTESAGNEDSPLS) is domain II. The segment at 106–321 (VLNPKYTFDT…GALNRVIAYS (216 aa)) is domain III, AAA+ region. 4 residues coordinate ATP: Gly150, Gly152, Lys153, and Thr154. Positions 322 to 443 (SLTENEITVE…SEIKRNLLGK (122 aa)) are domain IV, binds dsDNA.

The protein belongs to the DnaA family. In terms of assembly, oligomerizes as a right-handed, spiral filament on DNA at oriC.

Its subcellular location is the cytoplasm. Plays an essential role in the initiation and regulation of chromosomal replication. ATP-DnaA binds to the origin of replication (oriC) to initiate formation of the DNA replication initiation complex once per cell cycle. Binds the DnaA box (a 9 base pair repeat at the origin) and separates the double-stranded (ds)DNA. Forms a right-handed helical filament on oriC DNA; dsDNA binds to the exterior of the filament while single-stranded (ss)DNA is stabiized in the filament's interior. The ATP-DnaA-oriC complex binds and stabilizes one strand of the AT-rich DNA unwinding element (DUE), permitting loading of DNA polymerase. After initiation quickly degrades to an ADP-DnaA complex that is not apt for DNA replication. Binds acidic phospholipids. In Acetivibrio thermocellus (strain ATCC 27405 / DSM 1237 / JCM 9322 / NBRC 103400 / NCIMB 10682 / NRRL B-4536 / VPI 7372) (Clostridium thermocellum), this protein is Chromosomal replication initiator protein DnaA.